We begin with the raw amino-acid sequence, 115 residues long: Large ribosomal subunit protein eL30 (115 aa).

Ser-10 and Ser-16 each carry phosphoserine. N6-acetyllysine; alternate is present on Lys-26. Lys-26 is covalently cross-linked (Glycyl lysine isopeptide (Lys-Gly) (interchain with G-Cter in SUMO2); alternate).

This sequence belongs to the eukaryotic ribosomal protein eL30 family. Component of the large ribosomal subunit.

Its subcellular location is the cytoplasm. Component of the large ribosomal subunit. The ribosome is a large ribonucleoprotein complex responsible for the synthesis of proteins in the cell. The polypeptide is Large ribosomal subunit protein eL30 (RPL30) (Homo sapiens (Human)).